The following is a 331-amino-acid chain: Ketol-acid reductoisomerase (NADP(+)) (331 aa).

Residues 2-182 (ARMYYDSDAN…GGTRAGILET (181 aa)) enclose the KARI N-terminal Rossmann domain. NADP(+) contacts are provided by residues 25 to 28 (YGSQ), Ser-51, Ser-53, and 83 to 86 (DEVQ). His-108 is a catalytic residue. Gly-134 provides a ligand contact to NADP(+). The KARI C-terminal knotted domain occupies 183–328 (TFREETETDL…KDLRAMFSWL (146 aa)). Positions 191, 195, 227, and 231 each coordinate Mg(2+). Ser-252 is a substrate binding site.

This sequence belongs to the ketol-acid reductoisomerase family. The cofactor is Mg(2+).

The enzyme catalyses (2R)-2,3-dihydroxy-3-methylbutanoate + NADP(+) = (2S)-2-acetolactate + NADPH + H(+). It carries out the reaction (2R,3R)-2,3-dihydroxy-3-methylpentanoate + NADP(+) = (S)-2-ethyl-2-hydroxy-3-oxobutanoate + NADPH + H(+). It functions in the pathway amino-acid biosynthesis; L-isoleucine biosynthesis; L-isoleucine from 2-oxobutanoate: step 2/4. It participates in amino-acid biosynthesis; L-valine biosynthesis; L-valine from pyruvate: step 2/4. In terms of biological role, involved in the biosynthesis of branched-chain amino acids (BCAA). Catalyzes an alkyl-migration followed by a ketol-acid reduction of (S)-2-acetolactate (S2AL) to yield (R)-2,3-dihydroxy-isovalerate. In the isomerase reaction, S2AL is rearranged via a Mg-dependent methyl migration to produce 3-hydroxy-3-methyl-2-ketobutyrate (HMKB). In the reductase reaction, this 2-ketoacid undergoes a metal-dependent reduction by NADPH to yield (R)-2,3-dihydroxy-isovalerate. In Trichodesmium erythraeum (strain IMS101), this protein is Ketol-acid reductoisomerase (NADP(+)).